A 149-amino-acid polypeptide reads, in one-letter code: Putative eggshell protein (149 aa).

6 tandem repeats follow at residues 1–5 (YGYDK), 6–10 (YGYDK), 11–15 (YGYDK), 16–20 (YGYDK), 21–25 (YGYDK), and 26–30 (YGYEK). A 13 X 5 AA approximate tandem repeats of Y-G-Y-[DE]-K region spans residues 1 to 64 (YGYDKYGYDK…YGYDKYGDDK (64 aa)). The stretch at 31-34 (GYDK) is one 7; truncated repeat. 3 repeat units span residues 35–39 (YGYDK), 40–44 (YGYEK), and 45–49 (YGYDK). One copy of the 11; approximate repeat lies at 50-54 (YGNEK). Residues 55–59 (YGYDK) form repeat 12. The 13; approximate repeat unit spans residues 60-64 (YGDDK). Positions 105–124 (YRKDHDKHDHDEHDHHDDHH) are enriched in basic and acidic residues. The disordered stretch occupies residues 105-149 (YRKDHDKHDHDEHDHHDDHHDHRHHHHEHDHHHHHEHDHKNGKGY). Positions 125–141 (DHRHHHHEHDHHHHHEH) are enriched in basic residues.

This chain is Putative eggshell protein, found in Schistosoma mansoni (Blood fluke).